The chain runs to 217 residues: Serine acetyltransferase (217 aa).

Belongs to the transferase hexapeptide repeat family.

Its subcellular location is the cytoplasm. The catalysed reaction is L-serine + acetyl-CoA = O-acetyl-L-serine + CoA. It participates in amino-acid biosynthesis; L-cysteine biosynthesis; L-cysteine from L-serine: step 1/2. With respect to regulation, inhibited by cysteine. Functionally, catalyzes the acetylation of serine by acetyl-CoA to produce O-acetylserine (OAS). The chain is Serine acetyltransferase from Bacillus pumilus (strain SAFR-032).